A 457-amino-acid chain; its full sequence is Serine/threonine-protein phosphatase 2A regulatory subunit B'' subunit gamma (457 aa).

2 EF-hand domains span residues 276 to 311 and 344 to 379; these read PSALRVYGQYLNLDKDHNGMLSKEELSRYGTGTLTS and KEPAALQYIFKLLDMENKGYLNVFALNYFFRAIQEQ. Residues D289, D291, N293, M295, and E300 each contribute to the Ca(2+) site.

It localises to the nucleus. Its subcellular location is the cytoplasm. Possible role in the regulation of cell death. This chain is Serine/threonine-protein phosphatase 2A regulatory subunit B'' subunit gamma (ppp2r3c), found in Danio rerio (Zebrafish).